The sequence spans 336 residues: Secreted effector protein SifA (336 aa).

The interaction with host PLEKHM2 stretch occupies residues 1 to 330 (MPITIGNGFL…LHVRSEQQSG (330 aa)).

It belongs to the Sif family. In terms of assembly, interacts with host PLEKHM2. Interacts with SseJ; the interaction is indirect.

The protein localises to the secreted. The protein resides in the host cytoplasm. It is found in the host cell membrane. In terms of biological role, effector proteins function to alter host cell physiology and promote bacterial survival in host tissues. This protein is required for endosomal tubulation and formation of Salmonella-induced filaments (Sifs), which are filamentous structures containing lysosomal membrane glycoproteins within epithelial cells. Sif formation is concomitant with intracellular bacterial replication. In Salmonella typhimurium (strain LT2 / SGSC1412 / ATCC 700720), this protein is Secreted effector protein SifA (sifA).